A 367-amino-acid polypeptide reads, in one-letter code: Probable neutral protease 2 homolog MCYG_00239 (367 aa).

A signal peptide spans 1-19; the sequence is MQVLVALAALSSLAAPVVG. Positions 20–190 are excised as a propeptide; it reads FSIPRGVPVS…DGPFTRIDKR (171 aa). 3 disulfides stabilise this stretch: Cys198–Cys268, Cys275–Cys293, and Cys307–Cys367. Zn(2+) is bound at residue His318. Residue Glu319 is part of the active site. Residues His322 and Asp333 each contribute to the Zn(2+) site.

This sequence belongs to the peptidase M35 family. Requires Zn(2+) as cofactor.

It localises to the secreted. The catalysed reaction is Preferential cleavage of bonds with hydrophobic residues in P1'. Also 3-Asn-|-Gln-4 and 8-Gly-|-Ser-9 bonds in insulin B chain.. Functionally, probable secreted metalloprotease that shows high activities on basic nuclear substrates such as histone and protamine. May be involved in virulence. The sequence is that of Probable neutral protease 2 homolog MCYG_00239 from Arthroderma otae (strain ATCC MYA-4605 / CBS 113480) (Microsporum canis).